A 397-amino-acid chain; its full sequence is NADH-quinone oxidoreductase subunit D (397 aa).

This sequence belongs to the complex I 49 kDa subunit family. NDH-1 is composed of 14 different subunits. Subunits NuoB, C, D, E, F, and G constitute the peripheral sector of the complex.

It localises to the cell inner membrane. It carries out the reaction a quinone + NADH + 5 H(+)(in) = a quinol + NAD(+) + 4 H(+)(out). NDH-1 shuttles electrons from NADH, via FMN and iron-sulfur (Fe-S) centers, to quinones in the respiratory chain. The immediate electron acceptor for the enzyme in this species is believed to be ubiquinone. Couples the redox reaction to proton translocation (for every two electrons transferred, four hydrogen ions are translocated across the cytoplasmic membrane), and thus conserves the redox energy in a proton gradient. This is NADH-quinone oxidoreductase subunit D from Magnetococcus marinus (strain ATCC BAA-1437 / JCM 17883 / MC-1).